Consider the following 324-residue polypeptide: Acetyl-coenzyme A carboxylase carboxyl transferase subunit alpha (324 aa).

The 255-residue stretch at 37 to 291 folds into the CoA carboxyltransferase C-terminal domain; sequence ILEEKLENLE…DLMIQKTFQQ (255 aa).

Belongs to the AccA family. In terms of assembly, acetyl-CoA carboxylase is a heterohexamer composed of biotin carboxyl carrier protein (AccB), biotin carboxylase (AccC) and two subunits each of ACCase subunit alpha (AccA) and ACCase subunit beta (AccD).

Its subcellular location is the cytoplasm. The catalysed reaction is N(6)-carboxybiotinyl-L-lysyl-[protein] + acetyl-CoA = N(6)-biotinyl-L-lysyl-[protein] + malonyl-CoA. It functions in the pathway lipid metabolism; malonyl-CoA biosynthesis; malonyl-CoA from acetyl-CoA: step 1/1. Functionally, component of the acetyl coenzyme A carboxylase (ACC) complex. First, biotin carboxylase catalyzes the carboxylation of biotin on its carrier protein (BCCP) and then the CO(2) group is transferred by the carboxyltransferase to acetyl-CoA to form malonyl-CoA. The chain is Acetyl-coenzyme A carboxylase carboxyl transferase subunit alpha from Bacillus cereus (strain ATCC 14579 / DSM 31 / CCUG 7414 / JCM 2152 / NBRC 15305 / NCIMB 9373 / NCTC 2599 / NRRL B-3711).